A 198-amino-acid chain; its full sequence is Recombination protein RecR (198 aa).

Residues 57-72 form a C4-type zinc finger; it reads CQRCNTFSEAELCAIC. The Toprim domain maps to 80–175; sequence DQLCIVEMPA…TVTRIARGMP (96 aa).

It belongs to the RecR family.

Its function is as follows. May play a role in DNA repair. It seems to be involved in an RecBC-independent recombinational process of DNA repair. It may act with RecF and RecO. The chain is Recombination protein RecR from Chromobacterium violaceum (strain ATCC 12472 / DSM 30191 / JCM 1249 / CCUG 213 / NBRC 12614 / NCIMB 9131 / NCTC 9757 / MK).